We begin with the raw amino-acid sequence, 548 residues long: ATP synthase subunit alpha (548 aa).

172–179 (GDRKTGKT) contributes to the ATP binding site. Residues 511-548 (FETTSGESVVPDENVEAMSEDDVEKESVKVRKPAPKKK) are disordered. Residues 523 to 534 (ENVEAMSEDDVE) are compositionally biased toward acidic residues.

The protein belongs to the ATPase alpha/beta chains family. F-type ATPases have 2 components, CF(1) - the catalytic core - and CF(0) - the membrane proton channel. CF(1) has five subunits: alpha(3), beta(3), gamma(1), delta(1), epsilon(1). CF(0) has three main subunits: a(1), b(2) and c(9-12). The alpha and beta chains form an alternating ring which encloses part of the gamma chain. CF(1) is attached to CF(0) by a central stalk formed by the gamma and epsilon chains, while a peripheral stalk is formed by the delta and b chains.

It is found in the cell membrane. The enzyme catalyses ATP + H2O + 4 H(+)(in) = ADP + phosphate + 5 H(+)(out). Its function is as follows. Produces ATP from ADP in the presence of a proton gradient across the membrane. The alpha chain is a regulatory subunit. This chain is ATP synthase subunit alpha, found in Mycobacterium sp. (strain JLS).